The primary structure comprises 305 residues: Ribonuclease BN (305 aa).

Residues His-64, His-66, Asp-68, His-69, His-141, Asp-212, and His-270 each coordinate Zn(2+). The active-site Proton acceptor is Asp-68.

The protein belongs to the RNase Z family. RNase BN subfamily. As to quaternary structure, homodimer. It depends on Zn(2+) as a cofactor.

Functionally, zinc phosphodiesterase, which has both exoribonuclease and endoribonuclease activities. The protein is Ribonuclease BN of Salmonella paratyphi C (strain RKS4594).